Here is a 337-residue protein sequence, read N- to C-terminus: m7GpppX diphosphatase (337 aa).

The segment at 1–37 (MADTAPQPSKRKRERDPEEAEAPSTEEKEARVGNGTS) is disordered. Ala2 carries the N-acetylalanine modification. The nuclear localization signal (NLS) motif lies at 10 to 13 (KRKR). Residues Ser24 and Ser101 each carry the phosphoserine modification. N6-acetyllysine is present on residues Lys138 and Lys142. The nuclear export sequence (NES) signature appears at 142–154 (KYLHQDLHLVRET). Substrate is bound by residues Trp175, Glu185, Asp205, Lys207, and 268 to 279 (HYLPSYYHLHVH). Positions 275 to 279 (HLHVH) match the Histidine triad motif motif. The active-site Nucleophile is the His277.

This sequence belongs to the HIT family. As to quaternary structure, homodimer. Associates with components of the exosome multienzyme ribonuclease complex, such as EXOSC3 and EXOSC4. Interacts with NDOR1.

It is found in the cytoplasm. Its subcellular location is the nucleus. The catalysed reaction is a 5'-end (N(7)-methyl 5'-triphosphoguanosine)-ribonucleoside in mRNA + H2O = N(7)-methyl-GMP + a 5'-end diphospho-ribonucleoside in mRNA + 2 H(+). With respect to regulation, the hydrolytic product 7-methylguanosine diphosphate (m7GDP) efficiently inhibits the decapping scavenger activity and acts as a competitive inhibitor in vitro. Inhibited by 2,4-diaminoquinazoline. Decapping scavenger enzyme that catalyzes the cleavage of a residual cap structure following the degradation of mRNAs by the 3'-&gt;5' exosome-mediated mRNA decay pathway. Hydrolyzes cap analog structures like 7-methylguanosine nucleoside triphosphate (m7GpppG) with up to 10 nucleotide substrates (small capped oligoribonucleotides) and specifically releases 5'-phosphorylated RNA fragments and 7-methylguanosine monophosphate (m7GMP). Cleaves cap analog structures like tri-methyl guanosine nucleoside triphosphate (m3(2,2,7)GpppG) with very poor efficiency. Does not hydrolyze unmethylated cap analog (GpppG) and shows no decapping activity on intact m7GpppG-capped mRNA molecules longer than 25 nucleotides. Does not hydrolyze 7-methylguanosine diphosphate (m7GDP) to m7GMP. May also play a role in the 5'-&gt;3 mRNA decay pathway; m7GDP, the downstream product released by the 5'-&gt;3' mRNA mediated decapping activity, may be also converted by DCPS to m7GMP. Binds to m7GpppG and strongly to m7GDP. Plays a role in first intron splicing of pre-mRNAs. Inhibits activation-induced cell death. The sequence is that of m7GpppX diphosphatase (DCPS) from Sus scrofa (Pig).